The chain runs to 352 residues: RNA demethylase ALKBH5 (352 aa).

Basic and acidic residues predominate over residues 18–34 (RDKVFEYSNGEKRKYRE). The disordered stretch occupies residues 18–47 (RDKVFEYSNGEKRKYRESDDDESEYEERRD). The active site involves Y107. Residues N161, Y163, and H172 each coordinate 2-oxoglutarate. Fe cation is bound by residues H172, D174, and H234. A disulfide bridge connects residues C198 and C235. The 2-oxoglutarate site is built by H234 and R245. A disordered region spans residues 260–352 (LDSNSLSPSI…PTRRVKMRRH (93 aa)). Residues 272–285 (PKRRHILKAKRSHR) show a composition bias toward basic residues. 2 stretches are compositionally biased toward basic and acidic residues: residues 286–306 (KADPDAAHRPRVLEMDKELQR) and 315–343 (RHDDGSSENSWRRADDREPAARYTHDHAP).

Belongs to the alkB family. In terms of assembly, monomer. Fe(2+) is required as a cofactor.

Its subcellular location is the nucleus speckle. It catalyses the reaction an N(6)-methyladenosine in mRNA + 2-oxoglutarate + O2 = an adenosine in mRNA + formaldehyde + succinate + CO2. Its function is as follows. Dioxygenase that specifically demethylates N(6)-methyladenosine (m6A) RNA, the most prevalent internal modification of messenger RNA (mRNA) in higher eukaryotes. Demethylates RNA by oxidative demethylation, which requires molecular oxygen, alpha-ketoglutarate and iron. Demethylation of m6A mRNA affects mRNA processing, translation and export. In Danio rerio (Zebrafish), this protein is RNA demethylase ALKBH5 (alkbh5).